Here is a 243-residue protein sequence, read N- to C-terminus: uncharacterized protein (243 aa).

The first 19 residues, 1-19, serve as a signal peptide directing secretion; it reads MKSLPLLGILAFAANRLSA. N-linked (GlcNAc...) asparagine glycosylation is found at asparagine 112 and asparagine 206.

This is an uncharacterized protein from Encephalitozoon cuniculi (strain GB-M1) (Microsporidian parasite).